The sequence spans 267 residues: NH(3)-dependent NAD(+) synthetase (267 aa).

An ATP-binding site is contributed by 38-45 (GISGGVDS). Mg(2+) is bound at residue aspartate 44. Arginine 123 contacts deamido-NAD(+). Residue threonine 143 coordinates ATP. Residue glutamate 148 participates in Mg(2+) binding. Residues lysine 156 and aspartate 163 each contribute to the deamido-NAD(+) site. Lysine 172 and serine 193 together coordinate ATP. Deamido-NAD(+) is bound at residue 250-251 (HK).

The protein belongs to the NAD synthetase family. As to quaternary structure, homodimer.

It catalyses the reaction deamido-NAD(+) + NH4(+) + ATP = AMP + diphosphate + NAD(+) + H(+). Its pathway is cofactor biosynthesis; NAD(+) biosynthesis; NAD(+) from deamido-NAD(+) (ammonia route): step 1/1. Functionally, catalyzes the ATP-dependent amidation of deamido-NAD to form NAD. Uses ammonia as a nitrogen source. In Pyrobaculum aerophilum (strain ATCC 51768 / DSM 7523 / JCM 9630 / CIP 104966 / NBRC 100827 / IM2), this protein is NH(3)-dependent NAD(+) synthetase.